Consider the following 290-residue polypeptide: Lectin-related protein (290 aa).

Positions 1–36 (ANSNSRPHLLQTQKPFSVVLAISITFYLLLLNKVNS) are cleaved as a signal peptide. N-linked (GlcNAc...) asparagine glycans are attached at residues asparagine 119, asparagine 147, and asparagine 152. Residues glutamate 161 and aspartate 163 each contribute to the Mn(2+) site. Ca(2+)-binding residues include aspartate 163, asparagine 167, and aspartate 170. 2 residues coordinate Mn(2+): aspartate 170 and histidine 175.

The protein belongs to the leguminous lectin family. Homotetramer.

In terms of biological role, does not have any carbohydrate binding or agglutination activity. The chain is Lectin-related protein from Cladrastis kentukea (Yellow wood).